The primary structure comprises 453 residues: GTPase Der (453 aa).

EngA-type G domains are found at residues 3–167 (PIIV…ISEK) and 187–360 (IKVA…EDSK). GTP-binding positions include 9 to 16 (GRTNVGKS), 57 to 61 (DTAGL), 119 to 122 (NKID), 193 to 200 (GRPNVGKS), 240 to 244 (DTAGA), and 305 to 308 (NKCD). Residues 361–445 (RKISTSTLIK…PIQIQFKDNE (85 aa)) enclose the KH-like domain.

It belongs to the TRAFAC class TrmE-Era-EngA-EngB-Septin-like GTPase superfamily. EngA (Der) GTPase family. In terms of assembly, associates with the 50S ribosomal subunit.

Its function is as follows. GTPase that plays an essential role in the late steps of ribosome biogenesis. This chain is GTPase Der, found in Buchnera aphidicola subsp. Acyrthosiphon pisum (strain 5A).